Consider the following 80-residue polypeptide: Acyl carrier protein (80 aa).

Residues 4–79 form the Carrier domain; sequence DEIFSKVRSI…DVVNFIKKRK (76 aa). Residue Ser39 is modified to O-(pantetheine 4'-phosphoryl)serine.

It belongs to the acyl carrier protein (ACP) family. Post-translationally, 4'-phosphopantetheine is transferred from CoA to a specific serine of apo-ACP by AcpS. This modification is essential for activity because fatty acids are bound in thioester linkage to the sulfhydryl of the prosthetic group.

The protein resides in the cytoplasm. It participates in lipid metabolism; fatty acid biosynthesis. Carrier of the growing fatty acid chain in fatty acid biosynthesis. This is Acyl carrier protein from Borreliella burgdorferi (strain ATCC 35210 / DSM 4680 / CIP 102532 / B31) (Borrelia burgdorferi).